We begin with the raw amino-acid sequence, 237 residues long: Dynein axonemal assembly factor 19 (237 aa).

A coiled-coil region spans residues N8–K33.

The protein belongs to the DNAAF19/PR46b family. Homodimer.

Its subcellular location is the cytoplasm. The protein resides in the cell projection. The protein localises to the cilium. It is found in the flagellum. Its function is as follows. Dynein-attachment factor required for cilia motility. In Mus musculus (Mouse), this protein is Dynein axonemal assembly factor 19 (Dnaaf19).